Here is a 445-residue protein sequence, read N- to C-terminus: Phosphoglucosamine mutase (445 aa).

Catalysis depends on serine 102, which acts as the Phosphoserine intermediate. The Mg(2+) site is built by serine 102, aspartate 241, aspartate 243, and aspartate 245. At serine 102 the chain carries Phosphoserine.

Belongs to the phosphohexose mutase family. Mg(2+) serves as cofactor. Post-translationally, activated by phosphorylation.

It carries out the reaction alpha-D-glucosamine 1-phosphate = D-glucosamine 6-phosphate. Functionally, catalyzes the conversion of glucosamine-6-phosphate to glucosamine-1-phosphate. The sequence is that of Phosphoglucosamine mutase from Photorhabdus laumondii subsp. laumondii (strain DSM 15139 / CIP 105565 / TT01) (Photorhabdus luminescens subsp. laumondii).